A 519-amino-acid chain; its full sequence is Anthranilate synthase component 1 (519 aa).

L-tryptophan-binding positions include S39 and 290-292 (PYM). A chorismate-binding site is contributed by 327–328 (GT). E360 is a binding site for Mg(2+). Residues Y448, R468, 482 to 484 (GAG), and G484 contribute to the chorismate site. Residue E497 participates in Mg(2+) binding.

This sequence belongs to the anthranilate synthase component I family. In terms of assembly, heterotetramer consisting of two non-identical subunits: a beta subunit (TrpG) and a large alpha subunit (TrpE). Mg(2+) serves as cofactor.

It catalyses the reaction chorismate + L-glutamine = anthranilate + pyruvate + L-glutamate + H(+). The protein operates within amino-acid biosynthesis; L-tryptophan biosynthesis; L-tryptophan from chorismate: step 1/5. Feedback inhibited by tryptophan. Functionally, part of a heterotetrameric complex that catalyzes the two-step biosynthesis of anthranilate, an intermediate in the biosynthesis of L-tryptophan. In the first step, the glutamine-binding beta subunit (TrpG) of anthranilate synthase (AS) provides the glutamine amidotransferase activity which generates ammonia as a substrate that, along with chorismate, is used in the second step, catalyzed by the large alpha subunit of AS (TrpE) to produce anthranilate. In the absence of TrpG, TrpE can synthesize anthranilate directly from chorismate and high concentrations of ammonia. The sequence is that of Anthranilate synthase component 1 (trpE) from Serratia marcescens.